A 635-amino-acid polypeptide reads, in one-letter code: DNA mismatch repair protein MutL (635 aa).

The protein belongs to the DNA mismatch repair MutL/HexB family.

In terms of biological role, this protein is involved in the repair of mismatches in DNA. It is required for dam-dependent methyl-directed DNA mismatch repair. May act as a 'molecular matchmaker', a protein that promotes the formation of a stable complex between two or more DNA-binding proteins in an ATP-dependent manner without itself being part of a final effector complex. The protein is DNA mismatch repair protein MutL of Yersinia pestis bv. Antiqua (strain Angola).